The chain runs to 390 residues: NADH-quinone oxidoreductase subunit D (390 aa).

The protein belongs to the complex I 49 kDa subunit family. NDH-1 is composed of 14 different subunits. Subunits NuoB, C, D, E, F, and G constitute the peripheral sector of the complex.

The protein resides in the cell inner membrane. It catalyses the reaction a quinone + NADH + 5 H(+)(in) = a quinol + NAD(+) + 4 H(+)(out). Its function is as follows. NDH-1 shuttles electrons from NADH, via FMN and iron-sulfur (Fe-S) centers, to quinones in the respiratory chain. The immediate electron acceptor for the enzyme in this species is believed to be ubiquinone. Couples the redox reaction to proton translocation (for every two electrons transferred, four hydrogen ions are translocated across the cytoplasmic membrane), and thus conserves the redox energy in a proton gradient. The polypeptide is NADH-quinone oxidoreductase subunit D (Geobacter metallireducens (strain ATCC 53774 / DSM 7210 / GS-15)).